The primary structure comprises 37 residues: Calcitonin gene-related peptide 1 (37 aa).

A disulfide bridge connects residues cysteine 2 and cysteine 7. Phenylalanine 37 carries the phenylalanine amide modification.

It belongs to the calcitonin family.

It localises to the secreted. Functionally, CGRP1/CALCA is a peptide hormone that induces vasodilation mediated by the CALCRL-RAMP1 receptor complex. Dilates a variety of vessels including the coronary, cerebral and systemic vasculature. Its abundance in the CNS also points toward a neurotransmitter or neuromodulator role. It also elevates platelet cAMP. CGRP1 can also bind and activate CALCR-RAMP1 (AMYR1) receptor complex. This is Calcitonin gene-related peptide 1 (CALCA) from Sus scrofa (Pig).